We begin with the raw amino-acid sequence, 458 residues long: Glycine--tRNA ligase (458 aa).

2 residues coordinate substrate: R97 and E171. Residues 203–205 (RNE), 213–218 (FRTREF), 287–288 (EL), and 331–334 (GADR) contribute to the ATP site. Residue 218–222 (FEQME) participates in substrate binding. 327-331 (EPSLG) serves as a coordination point for substrate.

Belongs to the class-II aminoacyl-tRNA synthetase family. As to quaternary structure, homodimer.

The protein localises to the cytoplasm. The catalysed reaction is tRNA(Gly) + glycine + ATP = glycyl-tRNA(Gly) + AMP + diphosphate. Catalyzes the attachment of glycine to tRNA(Gly). In Bacillus anthracis, this protein is Glycine--tRNA ligase.